The sequence spans 188 residues: dCTP deaminase (188 aa).

DCTP contacts are provided by residues K111–R116, T135–E137, Q156, Y170, and Q180. The active-site Proton donor/acceptor is the E137.

It belongs to the dCTP deaminase family. Homotrimer.

The catalysed reaction is dCTP + H2O + H(+) = dUTP + NH4(+). Its pathway is pyrimidine metabolism; dUMP biosynthesis; dUMP from dCTP (dUTP route): step 1/2. Its function is as follows. Catalyzes the deamination of dCTP to dUTP. The protein is dCTP deaminase of Neisseria meningitidis serogroup C / serotype 2a (strain ATCC 700532 / DSM 15464 / FAM18).